The chain runs to 110 residues: Large ribosomal subunit protein uL22 (110 aa).

It belongs to the universal ribosomal protein uL22 family. Part of the 50S ribosomal subunit.

In terms of biological role, this protein binds specifically to 23S rRNA; its binding is stimulated by other ribosomal proteins, e.g. L4, L17, and L20. It is important during the early stages of 50S assembly. It makes multiple contacts with different domains of the 23S rRNA in the assembled 50S subunit and ribosome. The globular domain of the protein is located near the polypeptide exit tunnel on the outside of the subunit, while an extended beta-hairpin is found that lines the wall of the exit tunnel in the center of the 70S ribosome. The polypeptide is Large ribosomal subunit protein uL22 (Yersinia pseudotuberculosis serotype O:1b (strain IP 31758)).